A 306-amino-acid polypeptide reads, in one-letter code: Pantothenate kinase (306 aa).

91-98 serves as a coordination point for ATP; it reads GSVAVGKS.

This sequence belongs to the prokaryotic pantothenate kinase family.

It localises to the cytoplasm. The catalysed reaction is (R)-pantothenate + ATP = (R)-4'-phosphopantothenate + ADP + H(+). Its pathway is cofactor biosynthesis; coenzyme A biosynthesis; CoA from (R)-pantothenate: step 1/5. This chain is Pantothenate kinase (coaA), found in Streptococcus pyogenes serotype M3 (strain ATCC BAA-595 / MGAS315).